Here is a 193-residue protein sequence, read N- to C-terminus: Imidazoleglycerol-phosphate dehydratase (193 aa).

The protein belongs to the imidazoleglycerol-phosphate dehydratase family.

It localises to the cytoplasm. The enzyme catalyses D-erythro-1-(imidazol-4-yl)glycerol 3-phosphate = 3-(imidazol-4-yl)-2-oxopropyl phosphate + H2O. Its pathway is amino-acid biosynthesis; L-histidine biosynthesis; L-histidine from 5-phospho-alpha-D-ribose 1-diphosphate: step 6/9. This chain is Imidazoleglycerol-phosphate dehydratase, found in Saccharolobus islandicus (strain M.14.25 / Kamchatka #1) (Sulfolobus islandicus).